A 79-amino-acid chain; its full sequence is D-alanyl carrier protein (79 aa).

Positions 1-77 (MTVEEKIIDA…KIVEGVKELQ (77 aa)) constitute a Carrier domain. Serine 35 carries the O-(pantetheine 4'-phosphoryl)serine modification.

This sequence belongs to the DltC family. In terms of processing, 4'-phosphopantetheine is transferred from CoA to a specific serine of apo-DCP.

The protein resides in the cytoplasm. It participates in cell wall biogenesis; lipoteichoic acid biosynthesis. In terms of biological role, carrier protein involved in the D-alanylation of lipoteichoic acid (LTA). The loading of thioester-linked D-alanine onto DltC is catalyzed by D-alanine--D-alanyl carrier protein ligase DltA. The DltC-carried D-alanyl group is further transferred to cell membrane phosphatidylglycerol (PG) by forming an ester bond, probably catalyzed by DltD. D-alanylation of LTA plays an important role in modulating the properties of the cell wall in Gram-positive bacteria, influencing the net charge of the cell wall. The chain is D-alanyl carrier protein from Streptococcus uberis (strain ATCC BAA-854 / 0140J).